Here is a 112-residue protein sequence, read N- to C-terminus: Putative regulatory protein DP2861 (112 aa).

The protein belongs to the RemA family.

This chain is Putative regulatory protein DP2861, found in Desulfotalea psychrophila (strain LSv54 / DSM 12343).